We begin with the raw amino-acid sequence, 216 residues long: Thiamine-phosphate synthase (216 aa).

4-amino-2-methyl-5-(diphosphooxymethyl)pyrimidine contacts are provided by residues 35-39 (QLRDK) and asparagine 67. Positions 68 and 87 each coordinate Mg(2+). Residue serine 106 coordinates 4-amino-2-methyl-5-(diphosphooxymethyl)pyrimidine. A 2-[(2R,5Z)-2-carboxy-4-methylthiazol-5(2H)-ylidene]ethyl phosphate-binding site is contributed by 132-134 (TSS). Position 135 (lysine 135) interacts with 4-amino-2-methyl-5-(diphosphooxymethyl)pyrimidine. Residues glycine 163 and 183 to 184 (IS) each bind 2-[(2R,5Z)-2-carboxy-4-methylthiazol-5(2H)-ylidene]ethyl phosphate.

This sequence belongs to the thiamine-phosphate synthase family. Mg(2+) is required as a cofactor.

It carries out the reaction 2-[(2R,5Z)-2-carboxy-4-methylthiazol-5(2H)-ylidene]ethyl phosphate + 4-amino-2-methyl-5-(diphosphooxymethyl)pyrimidine + 2 H(+) = thiamine phosphate + CO2 + diphosphate. The enzyme catalyses 2-(2-carboxy-4-methylthiazol-5-yl)ethyl phosphate + 4-amino-2-methyl-5-(diphosphooxymethyl)pyrimidine + 2 H(+) = thiamine phosphate + CO2 + diphosphate. It catalyses the reaction 4-methyl-5-(2-phosphooxyethyl)-thiazole + 4-amino-2-methyl-5-(diphosphooxymethyl)pyrimidine + H(+) = thiamine phosphate + diphosphate. The protein operates within cofactor biosynthesis; thiamine diphosphate biosynthesis; thiamine phosphate from 4-amino-2-methyl-5-diphosphomethylpyrimidine and 4-methyl-5-(2-phosphoethyl)-thiazole: step 1/1. Its function is as follows. Condenses 4-methyl-5-(beta-hydroxyethyl)thiazole monophosphate (THZ-P) and 2-methyl-4-amino-5-hydroxymethyl pyrimidine pyrophosphate (HMP-PP) to form thiamine monophosphate (TMP). This Methanoregula boonei (strain DSM 21154 / JCM 14090 / 6A8) protein is Thiamine-phosphate synthase.